We begin with the raw amino-acid sequence, 463 residues long: Argininosuccinate lyase (463 aa).

It belongs to the lyase 1 family. Argininosuccinate lyase subfamily.

Its subcellular location is the cytoplasm. The enzyme catalyses 2-(N(omega)-L-arginino)succinate = fumarate + L-arginine. It functions in the pathway amino-acid biosynthesis; L-arginine biosynthesis; L-arginine from L-ornithine and carbamoyl phosphate: step 3/3. In Chlorobaculum parvum (strain DSM 263 / NCIMB 8327) (Chlorobium vibrioforme subsp. thiosulfatophilum), this protein is Argininosuccinate lyase.